A 419-amino-acid chain; its full sequence is UDP-N-acetylglucosamine 1-carboxyvinyltransferase (419 aa).

22-23 (KN) is a binding site for phosphoenolpyruvate. Position 93 (Arg-93) interacts with UDP-N-acetyl-alpha-D-glucosamine. Cys-117 (proton donor) is an active-site residue. Cys-117 bears the 2-(S-cysteinyl)pyruvic acid O-phosphothioketal mark. UDP-N-acetyl-alpha-D-glucosamine-binding residues include Asp-306 and Ile-328.

This sequence belongs to the EPSP synthase family. MurA subfamily.

It localises to the cytoplasm. It catalyses the reaction phosphoenolpyruvate + UDP-N-acetyl-alpha-D-glucosamine = UDP-N-acetyl-3-O-(1-carboxyvinyl)-alpha-D-glucosamine + phosphate. It participates in cell wall biogenesis; peptidoglycan biosynthesis. In terms of biological role, cell wall formation. Adds enolpyruvyl to UDP-N-acetylglucosamine. The polypeptide is UDP-N-acetylglucosamine 1-carboxyvinyltransferase (Ruthia magnifica subsp. Calyptogena magnifica).